The chain runs to 522 residues: Cytochrome bd-I ubiquinol oxidase subunit 1 (522 aa).

Met1 is modified (N-formylmethionine). Residues 1 to 22 are Cytoplasmic-facing; the sequence is MLDIVELSRLQFALTAMYHFLF. Heme b is bound at residue His19. Residues 23 to 42 traverse the membrane as a helical segment; that stretch reads VPLTLGMAFLLAIMETVYVL. Residues 43–94 lie on the Periplasmic side of the membrane; it reads SGKQIYKDMTKFWGKLFGINFALGVATGLTMEFQFGTNWSYYSHYVGDIFGA. Residues 95–114 form a helical membrane-spanning segment; the sequence is PLAIEGLMAFFLESTFVGLF. Over 115–129 the chain is Cytoplasmic; the sequence is FFGWDRLGKVQHMCV. A helical transmembrane segment spans residues 130–149; that stretch reads TWLVALGSNLSALWILVANG. The Periplasmic segment spans residues 150–187; that stretch reads WMQNPIASDFNFETMRMEMVSFSELVLNPVAQVKFVHT. His186 provides a ligand contact to heme b. Residues 188 to 207 traverse the membrane as a helical segment; sequence VASGYVTGAMFILGISAWYM. Residues 208 to 219 are Cytoplasmic-facing; sequence LKGRDFAFAKRS. A helical transmembrane segment spans residues 220–239; sequence FAIAASFGMAAVLSVIVLGD. Residues 240–392 lie on the Periplasmic side of the membrane; sequence ESGYEMGDVQ…VAPLYFAFRI (153 aa). Met393 contributes to the heme b binding site. A helical transmembrane segment spans residues 393–412; sequence MVACGFLLLAIIALSFWSVI. The Cytoplasmic segment spans residues 413 to 470; sequence RNRIGEKKWLLRAALYGIPLPWIAVEAGWFVAEYGRQPWAIGEVLPTAVANSSLTAGD. A helical membrane pass occupies residues 471 to 490; sequence LIFSMVLICGLYTLFLVAEL. Topologically, residues 491 to 522 are periplasmic; it reads FLMFKFARLGPSSLKTGRYHFEQSSTTTQPAR.

This sequence belongs to the cytochrome ubiquinol oxidase subunit 1 family. As to quaternary structure, heterodimer of subunits I and II. Heme b is required as a cofactor. It depends on heme d cis-diol as a cofactor.

The protein localises to the cell inner membrane. The enzyme catalyses 2 a ubiquinol + O2(in) + 4 H(+)(in) = 2 a ubiquinone + 2 H2O(in) + 4 H(+)(out). Its pathway is energy metabolism; oxidative phosphorylation. In terms of biological role, a terminal oxidase that produces a proton motive force by the vectorial transfer of protons across the inner membrane. It is the component of the aerobic respiratory chain of E.coli that predominates when cells are grown at low aeration. Generates a proton motive force using protons and electrons from opposite sides of the membrane to generate H(2)O, transferring 1 proton/electron. This Escherichia coli O6:H1 (strain CFT073 / ATCC 700928 / UPEC) protein is Cytochrome bd-I ubiquinol oxidase subunit 1 (cydA).